Reading from the N-terminus, the 501-residue chain is Cytochrome P450 71B25 (501 aa).

The helical transmembrane segment at Met-1 to Tyr-21 threads the bilayer. Cys-445 lines the heme pocket.

This sequence belongs to the cytochrome P450 family. Heme is required as a cofactor.

The protein resides in the membrane. The protein is Cytochrome P450 71B25 (CYP71B25) of Arabidopsis thaliana (Mouse-ear cress).